A 477-amino-acid chain; its full sequence is Lactate utilization protein B (477 aa).

2 consecutive 4Fe-4S ferredoxin-type domains span residues 304-334 (GTEFQSVLQCIRCAACINVCPVYRHVGGHSY) and 353-382 (YDDYKELPYASSLCAACSEACPVKIPLHEL). 7 residues coordinate [4Fe-4S] cluster: Cys313, Cys316, Cys319, Cys323, Cys366, Cys369, and Cys373. A disordered region spans residues 433–477 (KEDGKITKGPGPLKQWTQIRDFPAPNKSRFRDWFEDRRKEKGEDK). The span at 461 to 477 (RFRDWFEDRRKEKGEDK) shows a compositional bias: basic and acidic residues.

The protein belongs to the LutB/YkgF family.

Its function is as follows. Is involved in L-lactate degradation and allows cells to grow with lactate as the sole carbon source. Has probably a role as an electron transporter during oxidation of L-lactate. This is Lactate utilization protein B from Bacillus licheniformis (strain ATCC 14580 / DSM 13 / JCM 2505 / CCUG 7422 / NBRC 12200 / NCIMB 9375 / NCTC 10341 / NRRL NRS-1264 / Gibson 46).